A 172-amino-acid chain; its full sequence is MDLKDSIRVIDGFPKEGISFKDVTTLIQDKEAYKYSVDKIGEYLKDKNVDLIVAPEARGFLFGAPVAYKIGAGFIPVRKKGKLPCETVEVTYELEYGEDILEMHKDAIKKGQRVAIVDDLLATGGTINSVAKLVEALGGEVVAACFVVELTDLNGKDKLGDYDTMSLVKYNV.

It belongs to the purine/pyrimidine phosphoribosyltransferase family. Homodimer.

Its subcellular location is the cytoplasm. It carries out the reaction AMP + diphosphate = 5-phospho-alpha-D-ribose 1-diphosphate + adenine. It functions in the pathway purine metabolism; AMP biosynthesis via salvage pathway; AMP from adenine: step 1/1. Catalyzes a salvage reaction resulting in the formation of AMP, that is energically less costly than de novo synthesis. The chain is Adenine phosphoribosyltransferase from Clostridium acetobutylicum (strain ATCC 824 / DSM 792 / JCM 1419 / IAM 19013 / LMG 5710 / NBRC 13948 / NRRL B-527 / VKM B-1787 / 2291 / W).